The sequence spans 331 residues: Probable allantoicase (331 aa).

The protein belongs to the allantoicase family.

It catalyses the reaction allantoate + H2O = (S)-ureidoglycolate + urea. The protein operates within nitrogen metabolism; (S)-allantoin degradation; (S)-ureidoglycolate from allantoate (aminidohydrolase route): step 1/1. The protein is Probable allantoicase of Pseudomonas syringae pv. syringae (strain B728a).